Consider the following 603-residue polypeptide: Pyruvate decarboxylase 4 (603 aa).

The substrate site is built by aspartate 65 and histidine 152. The thiamine pyrophosphate binding stretch occupies residues 430–512 (DSWFNCQKLK…FLINNGGYTI (83 aa)). Residues aspartate 480, asparagine 507, and glycine 509 each contribute to the Mg(2+) site. Position 513 (glutamate 513) interacts with substrate.

It belongs to the TPP enzyme family. Homotetramer. Requires a metal cation as cofactor. Thiamine diphosphate serves as cofactor. As to expression, expressed in shoots and at lowe levels in roots, flowers and siliques.

The enzyme catalyses a 2-oxocarboxylate + H(+) = an aldehyde + CO2. The sequence is that of Pyruvate decarboxylase 4 (PDC4) from Arabidopsis thaliana (Mouse-ear cress).